The chain runs to 55 residues: Conotoxin Cal22b (55 aa).

Residues 1 to 5 (GRPSA) constitute a propeptide that is removed on maturation.

Contains 4 disulfide bonds. As to expression, expressed by the venom duct.

Its subcellular location is the secreted. Probable neurotoxin with unknown target. Possibly targets ion channels. This Californiconus californicus (California cone) protein is Conotoxin Cal22b.